The sequence spans 287 residues: Protease HtpX homolog (287 aa).

Helical transmembrane passes span 4–24 and 35–53; these read VGLF…VMSL and LLLM…SLAL. His139 is a binding site for Zn(2+). The active site involves Glu140. His143 is a Zn(2+) binding site. A run of 2 helical transmembrane segments spans residues 147-167 and 194-214; these read GDMV…IFLS and AVSM…VMWF. Glu219 is a Zn(2+) binding site.

This sequence belongs to the peptidase M48B family. The cofactor is Zn(2+).

The protein resides in the cell inner membrane. In Desulfotalea psychrophila (strain LSv54 / DSM 12343), this protein is Protease HtpX homolog.